Reading from the N-terminus, the 130-residue chain is Small ribosomal subunit protein uS8 (130 aa).

This sequence belongs to the universal ribosomal protein uS8 family. Part of the 30S ribosomal subunit. Contacts proteins S5 and S12.

One of the primary rRNA binding proteins, it binds directly to 16S rRNA central domain where it helps coordinate assembly of the platform of the 30S subunit. This chain is Small ribosomal subunit protein uS8, found in Histophilus somni (strain 129Pt) (Haemophilus somnus).